Reading from the N-terminus, the 436-residue chain is 3-ketoacyl-CoA thiolase (436 aa).

Cys99 acts as the Acyl-thioester intermediate in catalysis. Active-site proton acceptor residues include His392 and Cys422.

This sequence belongs to the thiolase-like superfamily. Thiolase family. As to quaternary structure, heterotetramer of two alpha chains (FadJ) and two beta chains (FadI).

It is found in the cytoplasm. The catalysed reaction is an acyl-CoA + acetyl-CoA = a 3-oxoacyl-CoA + CoA. Its pathway is lipid metabolism; fatty acid beta-oxidation. Catalyzes the final step of fatty acid oxidation in which acetyl-CoA is released and the CoA ester of a fatty acid two carbons shorter is formed. The protein is 3-ketoacyl-CoA thiolase of Shewanella pealeana (strain ATCC 700345 / ANG-SQ1).